We begin with the raw amino-acid sequence, 447 residues long: MTFENLGGHAQRRDESAYRLGEEDGRQKGESSRKKRPPLSRKNPSNVSFWSNEPIIRHSSVKTDRPQFHRADSTVTEQSSEILFDGNAESAEPLSKRSPPFLAYTPKRAVSATLATTQSSPISTSFNPQLPSNSNTNRFDFGSESQLSSNYTNDTGLSLLSLPKSVPHSPAMHKRTPSSDPNNPFGSTFANKFLDHIPAEPLPLPARPQISDLSFFRKPSLPSALQNIVIEKNASQRSVSEPLHNLSSRYSHFTSPHIDDSQHFPPMEFFARSDELPNPFVPFFDLDSKPNLSTLQDNASLTSQGSNLSSQNSGLSSSSSGIFGRMPIPAQSLDTTMLRTDSNSNIRRATTSFIANSEKENSSNFIDPQKYASIKFKNGNGVSKFMFLFTFGIVFPPLWILASFLPIPRTKIHQMRVKHVHWRIINRVVACLGVAITFLFIGLGVSG.

Disordered regions lie at residues 1–80, 115–184, and 295–322; these read MTFE…EQSS, ATTQ…PNNP, and LQDNASLTSQGSNLSSQNSGLSSSSSGI. Basic and acidic residues predominate over residues 11–32; the sequence is QRRDESAYRLGEEDGRQKGESS. The span at 42–51 shows a compositional bias: polar residues; it reads KNPSNVSFWS. Residues 61–72 are compositionally biased toward basic and acidic residues; it reads VKTDRPQFHRAD. Residues 115–158 show a composition bias toward polar residues; it reads ATTQSSPISTSFNPQLPSNSNTNRFDFGSESQLSSNYTNDTGLS. Low complexity predominate over residues 300 to 321; the sequence is SLTSQGSNLSSQNSGLSSSSSG. The next 2 membrane-spanning stretches (helical) occupy residues 385 to 405 and 424 to 444; these read FMFLFTFGIVFPPLWILASFL and IINRVVACLGVAITFLFIGLG.

It is found in the membrane. This is an uncharacterized protein from Schizosaccharomyces pombe (strain 972 / ATCC 24843) (Fission yeast).